The following is a 2742-amino-acid chain: Polycystin-1-like protein 1 (2742 aa).

Topologically, residues 1-1602 (MFCLWIFSLA…LDQFLSVSRD (1602 aa)) are extracellular. Asn35, Asn133, Asn149, Asn220, and Asn267 each carry an N-linked (GlcNAc...) asparagine glycan. 2 PKD domains span residues 286–372 (AVRI…VKLN) and 370–454 (KLNR…PCQP). N-linked (GlcNAc...) asparagine glycosylation is found at Asn383, Asn397, Asn486, Asn545, Asn693, Asn709, and Asn735. The 887-residue stretch at 452 to 1338 (CQPPPVKNLG…ITFFLPASLI (887 aa)) folds into the REJ domain. Disordered stretches follow at residues 767–829 (SPSR…QSDP) and 846–908 (DLRG…RPSV). The segment covering 779–799 (SELTDSPVSSVTVGFSGSESF) has biased composition (polar residues). Over residues 880–893 (SFPSDSDSFSHSSS) the composition is skewed to low complexity. Residues Asn1080, Asn1101, Asn1201, Asn1318, Asn1437, Asn1490, and Asn1568 are each glycosylated (N-linked (GlcNAc...) asparagine). The GAIN-B domain occupies 1436–1587 (HNFSITQEHL…KVLQQQIQSS (152 aa)). Intrachain disulfides connect Cys1541/Cys1569 and Cys1556/Cys1571. Residues 1541–1587 (CLSWEDQQGSWTQNGCRAQTNDKTSAVNCSCHHLKPLKVLQQQIQSS) form a GPS region. Residues 1603–1623 (LTVVFVLLLCVSLNIPVLVWC) traverse the membrane as a helical segment. At 1624 to 1812 (KKTDATSEEN…SPHLFTRAQR (189 aa)) the chain is on the cytoplasmic side. In terms of domain architecture, PLAT spans 1648–1769 (HFYAVTVHTG…GDGQVERMLR (122 aa)). Residues 1813 to 1833 (LCVCLLLFLGYACVNIIITHQ) traverse the membrane as a helical segment. Residues 1834 to 1851 (RDDQLPFDLGVIDVTSVS) lie on the Extracellular side of the membrane. A helical membrane pass occupies residues 1852-1872 (IATGLVSVVAVLPVAMVISFL). The Cytoplasmic segment spans residues 1873 to 2005 (FRVKSGRMTL…YRLASLLYHC (133 aa)). Residues 2006 to 2026 (VAWTLCLLFCLSCLILSAVLG) traverse the membrane as a helical segment. Residues 2027–2040 (TRLNSGKILHWIHS) are Extracellular-facing. A helical membrane pass occupies residues 2041 to 2061 (LFVSLTFCFFVIHPATILVLA). The Cytoplasmic portion of the chain corresponds to 2062–2151 (AVVSWRFKRS…KQAVIHKMLR (90 aa)). Residues 2152-2172 (DLCLCGSMFFLMVCITYGSPV) form a helical membrane-spanning segment. The Extracellular portion of the chain corresponds to 2173–2344 (DEHYPLNAAF…QSVRLYHSPS (172 aa)). Asn2218 carries N-linked (GlcNAc...) asparagine glycosylation. Residues 2345-2365 (MLDYTVMVWQLLFLLLSLVNL) traverse the membrane as a helical segment. The Cytoplasmic segment spans residues 2366–2378 (YHQTSTAAQHGLM). The chain crosses the membrane as a helical span at residues 2379–2401 (GYWKTTSISVEVSLVIVSLVYYV). Residues 2402–2442 (HYVYHPTMVMEVAEQLRRNHREHVDVSTLANSEQFSRTLRG) are Extracellular-facing. The chain crosses the membrane as a helical span at residues 2443–2463 (IILFLLAVKCVTVVRLNRILA). Over 2464-2467 (PSMP) the chain is Cytoplasmic. A helical transmembrane segment spans residues 2468 to 2488 (LLSLSSLLWPAISGLLLLSIF). The Extracellular segment spans residues 2489 to 2528 (SCMGRLLYIERTFHSIQTVLWHFWSLRKSRDLISLWRDFY). Residues 2529-2549 (YFGLLYASSAMLTTMVFAVMI) form a helical membrane-spanning segment. At 2550–2742 (RKAKRSPSTK…LVHHEQGTKN (193 aa)) the chain is on the cytoplasmic side.

This sequence belongs to the polycystin family. Heterodimer. Interacts with pkd2 to form a calcium channel. Interacts with pkd2l1 to form ciliary calcium channel. In terms of tissue distribution, expressed in Kupffer's vesicle, an organ equivalent to the node.

It localises to the cell projection. The protein localises to the cilium membrane. Its function is as follows. Component of a calcium-permeant ion channel formed by PKD1L2 and PKD1L1 in primary cilia, where it controls cilium calcium concentration, without affecting cytoplasmic calcium concentration, and regulates sonic hedgehog/SHH signaling and GLI2 transcription. The PKD1L1:PKD2L1 channel complex is mechanosensitive only at high pressures and is highly temperature sensitive. Also involved in left/right axis specification downstream of nodal flow by forming a complex with PKD2 in cilia to facilitate flow detection in left/right patterning. This is Polycystin-1-like protein 1 from Oryzias latipes (Japanese rice fish).